The following is a 553-amino-acid chain: Chaperonin GroEL (553 aa).

Residues threonine 30–proline 33, lysine 51, aspartate 87–threonine 91, glycine 415, and aspartate 495 contribute to the ATP site.

Belongs to the chaperonin (HSP60) family. Forms a cylinder of 14 subunits composed of two heptameric rings stacked back-to-back. Interacts with the co-chaperonin GroES.

The protein resides in the cytoplasm. It catalyses the reaction ATP + H2O + a folded polypeptide = ADP + phosphate + an unfolded polypeptide.. In terms of biological role, together with its co-chaperonin GroES, plays an essential role in assisting protein folding. The GroEL-GroES system forms a nano-cage that allows encapsulation of the non-native substrate proteins and provides a physical environment optimized to promote and accelerate protein folding. The protein is Chaperonin GroEL of Buchnera aphidicola subsp. Tuberolachnus salignus.